We begin with the raw amino-acid sequence, 816 residues long: Glycerol-3-phosphate acyltransferase (816 aa).

Positions 298-303 (CHRSHM) match the HXXXXD motif motif.

The protein belongs to the GPAT/DAPAT family.

It is found in the cell membrane. The catalysed reaction is sn-glycerol 3-phosphate + an acyl-CoA = a 1-acyl-sn-glycero-3-phosphate + CoA. It functions in the pathway phospholipid metabolism; CDP-diacylglycerol biosynthesis; CDP-diacylglycerol from sn-glycerol 3-phosphate: step 1/3. In Hamiltonella defensa subsp. Acyrthosiphon pisum (strain 5AT), this protein is Glycerol-3-phosphate acyltransferase.